The chain runs to 654 residues: APC membrane recruitment protein 2 (654 aa).

Disordered stretches follow at residues 1–105 (MEVQ…TAPL), 224–289 (ECGN…QSEQ), 316–369 (IIAD…PQVS), and 381–654 (PAHQ…QSRK). Over residues 9-18 (EPPPCDPQPP) the composition is skewed to pro residues. Basic and acidic residues predominate over residues 60-70 (ELVRSKTHDGL). Residues 427 to 454 (PQKDEDSPAPRRAEPVLHHAPARLEKRP) show a composition bias toward basic and acidic residues. Over residues 468–479 (SGSSKTGKQQPS) the composition is skewed to polar residues. The segment covering 565–575 (SPKCSSSATSS) has biased composition (low complexity). Over residues 576–586 (FRSMKGSTSLP) the composition is skewed to polar residues. The segment covering 601-621 (SHSSSQGALSSNLSPTSTTPP) has biased composition (low complexity). The span at 644-654 (GKSTSTSQSRK) shows a compositional bias: polar residues.

This sequence belongs to the Amer family.

The protein resides in the cell membrane. Its function is as follows. Negative regulator of the canonical Wnt signaling pathway involved in neuroectodermal patterning. Acts by specifically binding phosphatidylinositol 4,5-bisphosphate (PtdIns(4,5)P2), translocating to the cell membrane and interacting with key regulators of the canonical Wnt signaling pathway, such as components of the beta-catenin destruction complex. The chain is APC membrane recruitment protein 2 (amer2) from Danio rerio (Zebrafish).